Consider the following 226-residue polypeptide: Cytidylate kinase (226 aa).

An ATP-binding site is contributed by 10–18 (GPASSGKST).

It belongs to the cytidylate kinase family. Type 1 subfamily.

The protein resides in the cytoplasm. The enzyme catalyses CMP + ATP = CDP + ADP. It catalyses the reaction dCMP + ATP = dCDP + ADP. This is Cytidylate kinase from Streptococcus pyogenes serotype M4 (strain MGAS10750).